The following is a 61-amino-acid chain: Large ribosomal subunit protein uL30 (61 aa).

This sequence belongs to the universal ribosomal protein uL30 family. As to quaternary structure, part of the 50S ribosomal subunit.

This Chlorobaculum parvum (strain DSM 263 / NCIMB 8327) (Chlorobium vibrioforme subsp. thiosulfatophilum) protein is Large ribosomal subunit protein uL30.